Reading from the N-terminus, the 371-residue chain is Phosphate acyltransferase (371 aa).

Belongs to the PlsX family. In terms of assembly, homodimer. Probably interacts with PlsY.

The protein localises to the cytoplasm. It carries out the reaction a fatty acyl-[ACP] + phosphate = an acyl phosphate + holo-[ACP]. Its pathway is lipid metabolism; phospholipid metabolism. Its function is as follows. Catalyzes the reversible formation of acyl-phosphate (acyl-PO(4)) from acyl-[acyl-carrier-protein] (acyl-ACP). This enzyme utilizes acyl-ACP as fatty acyl donor, but not acyl-CoA. This is Phosphate acyltransferase from Polaromonas sp. (strain JS666 / ATCC BAA-500).